We begin with the raw amino-acid sequence, 283 residues long: Pantothenate synthetase (283 aa).

Residue 34–41 (MGALHDGH) participates in ATP binding. H41 acts as the Proton donor in catalysis. Position 65 (Q65) interacts with (R)-pantoate. Position 65 (Q65) interacts with beta-alanine. 152-155 (GSKD) lines the ATP pocket. Residue Q158 coordinates (R)-pantoate. Residues V181 and 189–192 (MSSR) each bind ATP.

This sequence belongs to the pantothenate synthetase family. As to quaternary structure, homodimer.

The protein localises to the cytoplasm. The catalysed reaction is (R)-pantoate + beta-alanine + ATP = (R)-pantothenate + AMP + diphosphate + H(+). It participates in cofactor biosynthesis; (R)-pantothenate biosynthesis; (R)-pantothenate from (R)-pantoate and beta-alanine: step 1/1. Its function is as follows. Catalyzes the condensation of pantoate with beta-alanine in an ATP-dependent reaction via a pantoyl-adenylate intermediate. The chain is Pantothenate synthetase from Rhodopseudomonas palustris (strain ATCC BAA-98 / CGA009).